The following is a 242-amino-acid chain: MSMLCYTLIIAFLIGIWAAPQSEDNVPLGSPATSDLSDTSCAQTHEGLKTSRNTDQRHPAPKKVDDQEPGSVANIIVDPKLFQKRQFQSSRVLFSTQPPPLSRDEQSVEFLNNEDALNRNIQAKRQNHPVHDLGEHSVCDSISEWVTKTTATDIKGNTVTVEVDVNLNNEVYKQYFFETKCRNPNPVPSGCRGIDSRLWNSYCTTTQTFVKALTMEGNQASWRFIRIDTACVCVITKKTDNL.

The N-terminal stretch at 1-18 (MSMLCYTLIIAFLIGIWA) is a signal peptide. Residues 19–125 (APQSEDNVPL…ALNRNIQAKR (107 aa)) constitute a propeptide that is removed on maturation. A disordered region spans residues 45 to 69 (HEGLKTSRNTDQRHPAPKKVDDQEP). The span at 46–66 (EGLKTSRNTDQRHPAPKKVDD) shows a compositional bias: basic and acidic residues. 3 disulfide bridges follow: Cys-139–Cys-203, Cys-181–Cys-231, and Cys-191–Cys-233.

It belongs to the NGF-beta family. As to quaternary structure, homodimer; non-covalently linked. In terms of tissue distribution, expressed by the venom gland.

The protein resides in the secreted. Its function is as follows. Nerve growth factor is important for the development and maintenance of the sympathetic and sensory nervous systems. It stimulates division and differentiation of sympathetic and embryonic sensory neurons as well as basal forebrain cholinergic neurons in the brain. Its relevance in the snake venom is not clear. However, it has been shown to inhibit metalloproteinase-dependent proteolysis of platelet glycoprotein Ib alpha, suggesting a metalloproteinase inhibition to prevent metalloprotease autodigestion and/or protection against prey proteases. Binds a lipid between the two protein chains in the homodimer. The lipid-bound form promotes histamine relase from mouse mast cells, contrary to the lipid-free form. The sequence is that of Venom nerve growth factor 3 from Pseudechis australis (Mulga snake).